The chain runs to 284 residues: Kynurenine formamidase avaC (284 aa).

Residues 47 to 51 (HGGGW) carry the HGGXW motif. The Nucleophile role is filled by Ser-130.

This sequence belongs to the kynurenine formamidase family.

It carries out the reaction N-formyl-L-kynurenine + H2O = L-kynurenine + formate + H(+). It participates in secondary metabolite metabolism. Kynurenine formamidase; part of the cluster that mediates the biosynthesis of a highly modified cyclo-arginine-tryptophan dipeptide (cRW). Within the pathway, avaC catalyzes the deformylation of the cyclo-Arg-formylkynurenine iketopiperazine (DKP), produced by the FAD-dependent monooxygenase avaB. The first step of the pathway is perfornmed by the arginine-containing cyclodipeptide synthase (RCPDS) avaA that acts as the scaffold-generating enzyme and is responsible for formation of the cyclo-Arg-Trp (cRW) diketopiperazine. AvaB then acts as a multifunctional flavoenzyme that is responsible for generating the cyclo-Arg-formylkynurenine DKP, which can be deformylated by avaC. AvaB then further catalyzes an additional N-oxidation followed by cyclization and dehydration. The next step is an N-acetylation of the guanidine group catalyzed by the arginine N-acetyltransferase avaD. The roles of the additional enzymes identified within the ava cluster still have to be determined. The polypeptide is Kynurenine formamidase avaC (Aspergillus versicolor).